A 1143-amino-acid chain; its full sequence is DNA polymerase III subunit alpha (1143 aa).

The protein belongs to the DNA polymerase type-C family. DnaE subfamily. As to quaternary structure, DNA polymerase III contains a core (composed of alpha, epsilon and theta chains) that associates with a tau subunit. This core dimerizes to form the PolIII' complex. PolIII' associates with the gamma complex (composed of gamma, delta, delta', psi and chi chains) and with the beta chain to form the complete DNA polymerase III complex.

Its subcellular location is the cytoplasm. The enzyme catalyses DNA(n) + a 2'-deoxyribonucleoside 5'-triphosphate = DNA(n+1) + diphosphate. DNA polymerase III is a complex, multichain enzyme responsible for most of the replicative synthesis in bacteria. This DNA polymerase also exhibits 3' to 5' exonuclease activity. The alpha chain is the DNA polymerase. In Caulobacter vibrioides (strain NA1000 / CB15N) (Caulobacter crescentus), this protein is DNA polymerase III subunit alpha (dnaE1).